Reading from the N-terminus, the 463-residue chain is uncharacterized protein (463 aa).

This is an uncharacterized protein from Lepidoptera (butterflies and moths).